The primary structure comprises 390 residues: ATP-sensitive inward rectifier potassium channel 11 (390 aa).

The Cytoplasmic portion of the chain corresponds to 1–65 (MLSRKGIIPE…LQDVFTTLVD (65 aa)). Residues Asn-48 and Arg-50 each coordinate ATP. The helical transmembrane segment at 66–92 (LKWPHTLLIFTMSFLCSWLLFAMVWWL) threads the bilayer. Topologically, residues 93–116 (IAFAHGDLAPGEGTTVPCVTSIHS) are extracellular. A disulfide bridge links Cys-110 with Cys-142. An intramembrane region (discontinuously helical; Pore-forming) is located at residues 117–133 (FSSAFLFSIEVQVTIGF). Positions 130 and 133 each coordinate K(+). The Selectivity filter motif lies at 130 to 135 (TIGFGG). Over 134–142 (GGRMVTEEC) the chain is Extracellular. The helical transmembrane segment at 143–171 (PLAILILIVQNIVGLMINAIMLGCIFMKT) threads the bilayer. The Cytoplasmic portion of the chain corresponds to 172–390 (SQAHRRAETL…RFSISPDSLS (219 aa)). Arg-176 serves as a coordination point for a 1,2-diacyl-sn-glycero-3-phospho-(1D-myo-inositol-4,5-bisphosphate). Tyr-330 contributes to the ATP binding site. Thr-341 is modified (phosphothreonine; by MAPK1). Ser-385 carries the phosphoserine; by MAPK1 modification.

The protein belongs to the inward rectifier-type potassium channel (TC 1.A.2.1) family. KCNJ11 subfamily. As to quaternary structure, homotetramer; the homotetramer binds four ATP molecules (one ATP per subunit). Forms an heterooctamer with ABCC8/SUR1; one KCNJ11 homotetramer interacts with four ABCC8/SUR1 molecules. Interacts with ABCC9/SUR2. Phosphorylation by MAPK1 results in changes in channel gating that destabilize the closed states and reduce the ATP sensitivity.

It localises to the membrane. The enzyme catalyses K(+)(in) = K(+)(out). Its activity is regulated as follows. KATP channels are regulated by cytoplasmic ATP/ADP ratios; ATP inhibits the channel by closing the pore, while ADP activates the channel. Activated by phosphatidylinositol 4,5-biphosphate (PtdIns(4,5)P2). In terms of biological role, inward rectifier potassium channel that forms the pore of ATP-sensitive potassium channels (KATP), regulating potassium permeability as a function of cytoplasmic ATP and ADP concentrations in many different cells. Inward rectifier potassium channels are characterized by a greater tendency to allow potassium to flow into the cell rather than out of it. Their voltage dependence is regulated by the concentration of extracellular potassium; as external potassium is raised, the voltage range of the channel opening shifts to more positive voltages. The inward rectification is mainly due to the blockage of outward current by internal magnesium. Can be blocked by extracellular barium. In pancreatic cells, it forms KATP channels with ABCC8/SUR1. Can form cardiac and smooth muscle-type KATP channels with ABCC9. This Cavia porcellus (Guinea pig) protein is ATP-sensitive inward rectifier potassium channel 11 (KCNJ11).